The following is a 246-amino-acid chain: UDP-N-acetyl-D-mannosaminuronic acid transferase (246 aa).

This sequence belongs to the glycosyltransferase 26 family.

The enzyme catalyses UDP-N-acetyl-alpha-D-mannosaminouronate + N-acetyl-alpha-D-glucosaminyl-di-trans,octa-cis-undecaprenyl diphosphate = beta-D-ManNAcA-(1-&gt;4)-alpha-D-GlcNAc-di-trans,octa-cis-undecaprenyl diphosphate + UDP + H(+). It participates in bacterial outer membrane biogenesis; enterobacterial common antigen biosynthesis. Functionally, catalyzes the synthesis of Und-PP-GlcNAc-ManNAcA (Lipid II), the second lipid-linked intermediate involved in enterobacterial common antigen (ECA) synthesis. The chain is UDP-N-acetyl-D-mannosaminuronic acid transferase from Yersinia pseudotuberculosis serotype IB (strain PB1/+).